Reading from the N-terminus, the 297-residue chain is Homoserine kinase (297 aa).

82 to 92 contacts ATP; it reads PVSRGLGSSAA.

This sequence belongs to the GHMP kinase family. Homoserine kinase subfamily.

Its subcellular location is the cytoplasm. It catalyses the reaction L-homoserine + ATP = O-phospho-L-homoserine + ADP + H(+). It participates in amino-acid biosynthesis; L-threonine biosynthesis; L-threonine from L-aspartate: step 4/5. In terms of biological role, catalyzes the ATP-dependent phosphorylation of L-homoserine to L-homoserine phosphate. The chain is Homoserine kinase from Clostridium botulinum (strain Okra / Type B1).